The sequence spans 714 residues: Transcription factor SFL2 (714 aa).

A DNA-binding region spans residues 15 to 134 (AFVHKLYTML…LVYIKRRSSS (120 aa)). Disordered stretches follow at residues 187–467 (YYQQ…VGVT), 565–658 (STSV…NNTN), and 670–714 (SHSQ…NMNK). 2 stretches are compositionally biased toward pro residues: residues 193–207 (GQVP…PPHQ) and 223–235 (QPPP…PPQP). Positions 266–275 (LDQTQPLSYT) are enriched in polar residues. Residues 276 to 285 (PQLEYQQQQY) show a composition bias toward low complexity. Over residues 286-296 (PQPPLPPPPPQ) the composition is skewed to pro residues. 2 stretches are compositionally biased toward polar residues: residues 310–321 (DNLSRPSPNEQH) and 354–372 (SEGS…LNNE). Residues 376–389 (ESSTSSSSTTVTST) show a composition bias toward low complexity. Composition is skewed to polar residues over residues 413 to 435 (SRMN…TQNG) and 444 to 461 (LIPS…TGTD). The span at 574–591 (GPFSTSTSTSTTSPTLSS) shows a compositional bias: low complexity. Positions 599-608 (EPQNSTIANG) are enriched in polar residues. 2 stretches are compositionally biased toward low complexity: residues 609–641 (TSIR…RQLS) and 648–658 (QQQQQPNNNTN). Residues 703 to 714 (SKSDDDTDNMNK) show a composition bias toward basic and acidic residues.

The protein belongs to the HSF family.

Its subcellular location is the nucleus. Functionally, transcription factor that plays a role of activator of filamentous growth and which is involved in invasive growth at a high temperature. Required for human oral epithelium colonization and damage. Promotes filamentous growth in EFG1- and FLO8-dependent manners. Antagonizes functions of SFL1. The sequence is that of Transcription factor SFL2 (SFL2) from Candida albicans (strain SC5314 / ATCC MYA-2876) (Yeast).